We begin with the raw amino-acid sequence, 230 residues long: Cytidylate kinase (230 aa).

16–24 (GPASAGKST) lines the ATP pocket.

This sequence belongs to the cytidylate kinase family. Type 1 subfamily.

It is found in the cytoplasm. It carries out the reaction CMP + ATP = CDP + ADP. The enzyme catalyses dCMP + ATP = dCDP + ADP. This chain is Cytidylate kinase, found in Lactobacillus gasseri (strain ATCC 33323 / DSM 20243 / BCRC 14619 / CIP 102991 / JCM 1131 / KCTC 3163 / NCIMB 11718 / NCTC 13722 / AM63).